A 344-amino-acid chain; its full sequence is Uroporphyrinogen decarboxylase (344 aa).

Residues 23–27 (RQAGR), Asp-73, Tyr-149, Thr-204, and His-321 each bind substrate.

This sequence belongs to the uroporphyrinogen decarboxylase family. As to quaternary structure, homodimer.

The protein resides in the cytoplasm. It carries out the reaction uroporphyrinogen III + 4 H(+) = coproporphyrinogen III + 4 CO2. It functions in the pathway porphyrin-containing compound metabolism; protoporphyrin-IX biosynthesis; coproporphyrinogen-III from 5-aminolevulinate: step 4/4. Its function is as follows. Catalyzes the decarboxylation of four acetate groups of uroporphyrinogen-III to yield coproporphyrinogen-III. The polypeptide is Uroporphyrinogen decarboxylase (Francisella tularensis subsp. novicida (strain U112)).